We begin with the raw amino-acid sequence, 265 residues long: Protein Rv2993c (265 aa).

3 residues coordinate a divalent metal cation: E114, E116, and D145.

The protein in the C-terminal section; belongs to the FAH family. A divalent metal cation is required as a cofactor.

This is Protein Rv2993c from Mycobacterium tuberculosis (strain ATCC 25618 / H37Rv).